The primary structure comprises 473 residues: FAD-dependent monooxygenase ctvC (473 aa).

Glutamate 37, alanine 51, and arginine 110 together coordinate FAD. The helical transmembrane segment at 218 to 238 (IGPGFTFLIFPAAGDSLFWVL) threads the bilayer. Residues aspartate 310 and alanine 323 each contribute to the FAD site. Asparagine 358 is a glycosylation site (N-linked (GlcNAc...) asparagine). A helical transmembrane segment spans residues 451-471 (LVYCFGVVILLWISWAVFNVN).

Belongs to the paxM FAD-dependent monooxygenase family. Requires FAD as cofactor.

The protein resides in the membrane. Its pathway is mycotoxin biosynthesis. In terms of biological role, FAD-dependent monooxygenase; part of the gene cluster that mediates the biosynthesis of citreoviridin, an inhibitor of the of F1-ATPase beta-subunit. The HR-PKS ctvA accepts acetyl-CoA as the starter unit and catalyzes eight iterations of malonyl-CoA extension and four iterations of SAM-dependent methylation at C4, C12, C14, and C16. The KR and DH domains selectively act on the first six iterations to generate the hexaene chain. In the last three iterations, the KR and DH domains terminate their functions to yield a beta,delta-diketo ester moiety, which then undergoes intramolecular cyclization to yield an alpha-pyrone intermediate. Subsequently, ctvB methylates the alpha-pyrone hydroxyl group to generate citreomontanin. In order to form the tetrahydrofuran ring with the correct stereochemistry, the terminal alkenes of citreomontanin need to undergo isomerization to yield a (17Z)-hexaene, a step that could be catalyzed by ctvC. The (17Z)-hexaene then undergoes bisepoxidation by ctvC to form a (17R,16R,15S,14R)-bisepoxide moiety. Lastly, ctvD acts as a regioselective hydrolase to form the tetrahydrofuran ring with the substituents in the correct absolute configuration, completing the biosynthesis of citreoviridin. In Aspergillus terreus (strain NIH 2624 / FGSC A1156), this protein is FAD-dependent monooxygenase ctvC.